A 259-amino-acid polypeptide reads, in one-letter code: Tryptophan synthase alpha chain (259 aa).

Residues glutamate 52 and aspartate 63 each act as proton acceptor in the active site.

The protein belongs to the TrpA family. Tetramer of two alpha and two beta chains.

The catalysed reaction is (1S,2R)-1-C-(indol-3-yl)glycerol 3-phosphate + L-serine = D-glyceraldehyde 3-phosphate + L-tryptophan + H2O. It participates in amino-acid biosynthesis; L-tryptophan biosynthesis; L-tryptophan from chorismate: step 5/5. In terms of biological role, the alpha subunit is responsible for the aldol cleavage of indoleglycerol phosphate to indole and glyceraldehyde 3-phosphate. The chain is Tryptophan synthase alpha chain from Streptococcus gordonii (strain Challis / ATCC 35105 / BCRC 15272 / CH1 / DL1 / V288).